A 557-amino-acid chain; its full sequence is Formate--tetrahydrofolate ligase 2 (557 aa).

ATP is bound at residue 66-73 (TPAGEGKT).

This sequence belongs to the formate--tetrahydrofolate ligase family.

The catalysed reaction is (6S)-5,6,7,8-tetrahydrofolate + formate + ATP = (6R)-10-formyltetrahydrofolate + ADP + phosphate. Its pathway is one-carbon metabolism; tetrahydrofolate interconversion. This is Formate--tetrahydrofolate ligase 2 from Streptococcus pyogenes serotype M6 (strain ATCC BAA-946 / MGAS10394).